We begin with the raw amino-acid sequence, 383 residues long: MESGSNSTSCPMAFAGDNSDGPMCPMMMMMMPVITSHQQHHGHDQQHQHQQQHDGYAYQSHHQHSSLLFLQSLTPPSQEAKNKVRSSCSPSSGAPAYSFMEINHQNELLAGGLQSPVLSSLLVKAKIMAHPHYHRLLLAYVNCQKVGAPPEVQARLEETCSSAAAAAASMGPTGSLGEDPGLDQFMEAYCEMLVKYEQELSKPFKEAMVFLQHVECQFKSLSLSSPSSLGYGEAAIERNNNGSSEEEVDMNNEFVDPQAEDRELKGQLLRKYSGYLGSLKQEFMKKRKKGKLPKEARQQLLDWWSRHYKWPYPSEQQKLALAESTGLDQKQINNWFINQRKRHWKPSEDMQFVVMDATHPLHYFMGNVLGNPFPIDHISGTML.

The tract at residues 37-58 (HQQHHGHDQQHQHQQQHDGYAY) is disordered. Positions 263–283 (ELKGQLLRKYSGYLGSLKQEF) constitute an ELK domain. Positions 284–347 (MKKRKKGKLP…NQRKRHWKPS (64 aa)) form a DNA-binding region, homeobox; TALE-type.

It belongs to the TALE/KNOX homeobox family.

It localises to the nucleus. Its function is as follows. Required for shoot apical meristem formation during embryogenesis. Probably binds to the DNA sequence 5'-TGAC-3'. The protein is Homeobox protein SHOOT MERISTEMLESS (STM) of Brassica oleracea (Wild cabbage).